The primary structure comprises 685 residues: Potassium-transporting ATPase ATP-binding subunit (685 aa).

4 consecutive transmembrane segments (helical) span residues 36–56, 68–88, 218–238, and 255–275; these read MFVVEVGFFVTILLTIFPSIF, LIVTIILFITVLFANFAESVA, IALNTILVSLTLIFLIVLVAL, and IALLVCLIPTTIGGLLSAIGI. Residue Asp306 is the 4-aspartylphosphate intermediate of the active site. ATP-binding positions include Asp343, Glu347, 375–382, and Lys394; that span reads FTAQTRMS. Mg(2+)-binding residues include Asp517 and Asp521. The next 3 membrane-spanning stretches (helical) occupy residues 587 to 607, 615 to 635, and 654 to 674; these read FAIIPAIFTIAIPKMQLMNIM, AILSALIFNAIIIPALIPIAM, and IVFGFGGIIVPFVGIKIIDMI.

Belongs to the cation transport ATPase (P-type) (TC 3.A.3) family. Type IA subfamily. The system is composed of three essential subunits: KdpA, KdpB and KdpC.

Its subcellular location is the cell membrane. It catalyses the reaction K(+)(out) + ATP + H2O = K(+)(in) + ADP + phosphate + H(+). Functionally, part of the high-affinity ATP-driven potassium transport (or Kdp) system, which catalyzes the hydrolysis of ATP coupled with the electrogenic transport of potassium into the cytoplasm. This subunit is responsible for energy coupling to the transport system and for the release of the potassium ions to the cytoplasm. This is Potassium-transporting ATPase ATP-binding subunit from Clostridium acetobutylicum (strain ATCC 824 / DSM 792 / JCM 1419 / IAM 19013 / LMG 5710 / NBRC 13948 / NRRL B-527 / VKM B-1787 / 2291 / W).